A 417-amino-acid polypeptide reads, in one-letter code: Aminoacyltransferase FemA (417 aa).

It belongs to the FemABX family.

It is found in the cytoplasm. It carries out the reaction beta-D-GlcNAc-(1-&gt;4)-Mur2Ac(oyl-L-Ala-D-isoglutaminyl-L-Lys-(N(6)-Gly)-D-Ala-D-Ala)-di-trans,octa-cis-undecaprenyl diphosphate + 2 glycyl-tRNA(Gly) = MurNAc-L-Ala-D-isoglutaminyl-L-Lys-(N(6)-tri-Gly)-D-Ala-D-Ala-diphospho-di-trans,octa-cis-undecaprenyl-GlcNAc + 2 tRNA(Gly) + 2 H(+). Catalyzes the incorporation of amino acid(s) into the interchain peptide bridge of peptidoglycan, using aminoacyl-tRNA as amino acid donor. The protein is Aminoacyltransferase FemA (femA) of Staphylococcus epidermidis.